A 469-amino-acid polypeptide reads, in one-letter code: Phenolic glucoside malonyltransferase 1 (469 aa).

Residue Met1 is modified to N-acetylmethionine. His169 serves as the catalytic Proton acceptor. An HXXXD motif motif is present at residues 169–173 (HAVLD). Residue 291–292 (ST) coordinates malonyl-CoA. Asp413 acts as the Proton acceptor in catalysis. Residues 413–417 (DFGWG) carry the DFGWG motif motif.

This sequence belongs to the plant acyltransferase family. Phenolic glucoside malonyltransferase subfamily.

It carries out the reaction a flavonol 3-O-beta-D-glucoside + malonyl-CoA = a flavonol 3-O-(6-O-malonyl-beta-D-glucoside) + CoA. The enzyme catalyses a flavonol 7-O-beta-D-glucoside + malonyl-CoA = a flavonol 7-O-(6-O-malonyl-beta-D-glucoside) + CoA. Functionally, malonyltransferase acting on xenobiotic glucosides. Has activity toward 2-Naphthol glucoside (2NAG), 1-Naphthol glucoside (1NAG), kaempferol 7-O-glucoside, kaempferol 3-O-glucoside, hydroxycoumarin glucosides, phenol-glucosides and isoflavone glucoside (daidzin), but not toward 4-coumaroyl glucoside, kaempferol 3,7-O-diglucoside, salicylic acid glucoside and phlorizin. In vivo, seems to be involved in the malonylation of 2-Naphthol glucoside while PMAT2 would be involved in the malonylation of 4-methylumbelliferone glucoside or 4-nitrophenyl glucoside. The polypeptide is Phenolic glucoside malonyltransferase 1 (PMAT1) (Arabidopsis thaliana (Mouse-ear cress)).